A 692-amino-acid chain; its full sequence is ABC transporter F family member 5 (692 aa).

A disordered region spans residues 64-95 (EIESLFSKQPSQQDSDRKRNGKSSKNGASGIS). Polar residues predominate over residues 86–95 (SSKNGASGIS). ABC transporter domains follow at residues 98-356 (VKLE…ETQN) and 425-640 (VNVK…TKEL). ATP is bound by residues 130–137 (GVNGAGKT) and 457–464 (GPNGCGKS). Positions 644–692 (AELEEKAPKVKAKSKMSKAEKEARKKQKMQAFQQAKQKSKASKNSKRWN) are disordered. The segment covering 680-692 (QKSKASKNSKRWN) has biased composition (basic residues).

This sequence belongs to the ABC transporter superfamily. ABCF family. EF3 (TC 3.A.1.121) subfamily.

This is ABC transporter F family member 5 (ABCF5) from Arabidopsis thaliana (Mouse-ear cress).